The sequence spans 262 residues: MASSLHKHLLSAARHHLKETKRMSMMVALNLAAEILAVDCGLKPCFLYDYTTSGVQQICSYLKELQNLGLIVGHLHILNVEETILIINVTKAVSYLETLLHSQDLHLIDVSNYLSQPELVSSNQVPQIHAQLAELLGHIKPYQSGQPTSVSVGGIQSPEWNLCTMFGFLLQFPSTYWFDTQKGFENCLSFTPLRLFTVQANCSRIGHQSVQIYSFTVPECVYQATQVHLEDWSKSLKQAFNEQNYFTDLEIITNTAQVCCVY.

This sequence belongs to the UPF0739 family.

This chain is UPF0739 protein C1orf74 homolog, found in Xenopus laevis (African clawed frog).